A 512-amino-acid polypeptide reads, in one-letter code: Glutathione-binding protein GsiB (512 aa).

A signal peptide spans 1 to 26 (MARAVHRSGLVALGIATALMASCAFA).

Belongs to the bacterial solute-binding protein 5 family. In terms of assembly, the complex is composed of two ATP-binding proteins (GsiA), two transmembrane proteins (GsiC and GsiD) and a solute-binding protein (GsiB).

The protein resides in the periplasm. Functionally, part of the ABC transporter complex GsiABCD involved in glutathione import. Binds glutathione. The protein is Glutathione-binding protein GsiB of Escherichia coli O157:H7.